A 132-amino-acid polypeptide reads, in one-letter code: Small ribosomal subunit protein uS11 (132 aa).

The disordered stretch occupies residues 1 to 24 (MAAPKQAARKPRRRDRKSVPVGQA). Residues 7 to 16 (AARKPRRRDR) are compositionally biased toward basic residues.

This sequence belongs to the universal ribosomal protein uS11 family. In terms of assembly, part of the 30S ribosomal subunit. Interacts with proteins S7 and S18. Binds to IF-3.

In terms of biological role, located on the platform of the 30S subunit, it bridges several disparate RNA helices of the 16S rRNA. Forms part of the Shine-Dalgarno cleft in the 70S ribosome. The polypeptide is Small ribosomal subunit protein uS11 (Bifidobacterium longum (strain DJO10A)).